A 304-amino-acid polypeptide reads, in one-letter code: Ribonuclease Z (304 aa).

Positions 63, 65, 67, 68, 143, 213, and 271 each coordinate Zn(2+). Asp67 serves as the catalytic Proton acceptor.

The protein belongs to the RNase Z family. In terms of assembly, homodimer. The cofactor is Zn(2+).

It catalyses the reaction Endonucleolytic cleavage of RNA, removing extra 3' nucleotides from tRNA precursor, generating 3' termini of tRNAs. A 3'-hydroxy group is left at the tRNA terminus and a 5'-phosphoryl group is left at the trailer molecule.. Functionally, zinc phosphodiesterase, which displays some tRNA 3'-processing endonuclease activity. Probably involved in tRNA maturation, by removing a 3'-trailer from precursor tRNA. This Bacteroides fragilis (strain ATCC 25285 / DSM 2151 / CCUG 4856 / JCM 11019 / LMG 10263 / NCTC 9343 / Onslow / VPI 2553 / EN-2) protein is Ribonuclease Z.